A 714-amino-acid chain; its full sequence is Polyribonucleotide nucleotidyltransferase (714 aa).

Mg(2+)-binding residues include aspartate 488 and aspartate 494. Residues 555–614 (PRIEVMNIPTDKIRDVIGSGGKVIREIVEKTGAKINIEDDGTVKIASSNGKEIEAAKKWI) form the KH domain. In terms of domain architecture, S1 motif spans 624–692 (GEIYEGTVVK…ERGKVRLSMK (69 aa)).

It belongs to the polyribonucleotide nucleotidyltransferase family. The cofactor is Mg(2+).

It is found in the cytoplasm. It catalyses the reaction RNA(n+1) + phosphate = RNA(n) + a ribonucleoside 5'-diphosphate. Its function is as follows. Involved in mRNA degradation. Catalyzes the phosphorolysis of single-stranded polyribonucleotides processively in the 3'- to 5'-direction. The sequence is that of Polyribonucleotide nucleotidyltransferase from Brucella ovis (strain ATCC 25840 / 63/290 / NCTC 10512).